Reading from the N-terminus, the 184-residue chain is MLNDIKNNAQTRMAKSIDALKHTLTSIRTGRATPALLDRVTVNAYGNASTPLNQVASISNADAHSLLVTPFDKGMIKEIEKGLYNAEFTPNTLGTAIRINMPPPTEERRKELVKQVQKEGEGAKIAIRNIRQDANKEIAKLVKDKAISEDEKKRGEDDIQKLTDTNIKDVDKVVADKEKELLSV.

The protein belongs to the RRF family.

The protein resides in the cytoplasm. Responsible for the release of ribosomes from messenger RNA at the termination of protein biosynthesis. May increase the efficiency of translation by recycling ribosomes from one round of translation to another. The sequence is that of Ribosome-recycling factor from Stenotrophomonas maltophilia (strain K279a).